The primary structure comprises 648 residues: Actin-related protein 5 (648 aa).

The tract at residues 34-59 is disordered; it reads LTKPRKDRKKEAAASEGSASQTTVEQ. 2 coiled-coil regions span residues 277-311 and 340-364; these read TAEQKQEKRRELAHRLLDIKKNREQEKLREDEQQL and TLEDLDSLIATINSRIKRAQERAQS. 2 disordered regions span residues 357 to 385 and 403 to 455; these read RAQERAQSGPRPSKQQERLNKMPKPPEGM and GRKQ…GMND. Over residues 414-428 the composition is skewed to basic and acidic residues; the sequence is EQAKRHTHAAQERMR. Phosphoserine is present on residues Ser471 and Ser473.

Belongs to the actin family. ARP5 subfamily. As to quaternary structure, component of the chromatin remodeling Ino80 complex.

It localises to the nucleus. Proposed core component of the chromatin remodeling Ino80 complex which is involved in transcriptional regulation, DNA replication and probably DNA repair. This is Actin-related protein 5 from Drosophila melanogaster (Fruit fly).